The primary structure comprises 411 residues: Dual-specificity RNA methyltransferase RlmN (411 aa).

The active-site Proton acceptor is the Glu-125. The 250-residue stretch at 131-380 (EEGRGTLCIS…IRTPRGRDIL (250 aa)) folds into the Radical SAM core domain. Cys-138 and Cys-383 are disulfide-bonded. Positions 145, 149, and 152 each coordinate [4Fe-4S] cluster. S-adenosyl-L-methionine contacts are provided by residues 209–210 (GE), Ser-241, 263–265 (SLH), and Asn-340. Cys-383 serves as the catalytic S-methylcysteine intermediate.

This sequence belongs to the radical SAM superfamily. RlmN family. Requires [4Fe-4S] cluster as cofactor.

The protein resides in the cytoplasm. The enzyme catalyses adenosine(2503) in 23S rRNA + 2 reduced [2Fe-2S]-[ferredoxin] + 2 S-adenosyl-L-methionine = 2-methyladenosine(2503) in 23S rRNA + 5'-deoxyadenosine + L-methionine + 2 oxidized [2Fe-2S]-[ferredoxin] + S-adenosyl-L-homocysteine. It catalyses the reaction adenosine(37) in tRNA + 2 reduced [2Fe-2S]-[ferredoxin] + 2 S-adenosyl-L-methionine = 2-methyladenosine(37) in tRNA + 5'-deoxyadenosine + L-methionine + 2 oxidized [2Fe-2S]-[ferredoxin] + S-adenosyl-L-homocysteine. Its function is as follows. Specifically methylates position 2 of adenine 2503 in 23S rRNA and position 2 of adenine 37 in tRNAs. m2A2503 modification seems to play a crucial role in the proofreading step occurring at the peptidyl transferase center and thus would serve to optimize ribosomal fidelity. The protein is Dual-specificity RNA methyltransferase RlmN of Brucella canis (strain ATCC 23365 / NCTC 10854 / RM-666).